A 298-amino-acid polypeptide reads, in one-letter code: Single myb histone 2 (298 aa).

The HTH myb-type domain maps to 1-61 (MGVPKQRWTP…KWRNLSVTAG (61 aa)). Residues 28–57 (WRTILRDSDFSALLRLRSNVDLKDKWRNLS) constitute a DNA-binding region (H-T-H motif). One can recognise an H15 domain in the interval 124–192 (SVARLDDLIV…KVNQKYRIAP (69 aa)). A coiled-coil region spans residues 237-278 (EEAAAFAAKAVAEAEVAMAEAEEAARVAEAAENDAEAAKAFL).

The protein belongs to the histone H1/H5 family. SMH subfamily. In terms of assembly, forms a homodimer and heterodimers.

It is found in the nucleus. Its subcellular location is the chromosome. The protein localises to the nucleolus. The protein resides in the telomere. In terms of biological role, binds preferentially double-stranded telomeric repeats, but may also bind to the single telomeric strand. This chain is Single myb histone 2 (SMH2), found in Zea mays (Maize).